The primary structure comprises 103 residues: Large ribosomal subunit protein bL21 (103 aa).

The protein belongs to the bacterial ribosomal protein bL21 family. In terms of assembly, part of the 50S ribosomal subunit. Contacts protein L20.

This protein binds to 23S rRNA in the presence of protein L20. This chain is Large ribosomal subunit protein bL21, found in Enterobacter sp. (strain 638).